The following is a 654-amino-acid chain: MTQTTESELREKYLDLLSQQFDSPEKLATEIVNLESILELPKGTEHFVSDLHGEYESFQHVLRNGSGNVRSKINDLYAKTLSQKEIDDLAALVYYPEEKLKLVKNNFDSKGKLNVWYITTIEQLIDLITYCSSKYTRSKLRKALPKEYTYIVEELLYKNNEFNNKKSYYETLVNQIIELEQSDDLIIGLSYSIQRLVVDHLHVVGDIYDRGPQPDKIMDTLINYHSVDIQWGNHDVLWIGAYAGSKACLANLLRICARYDNLDIIEDAYGINLRPLLTLAEEHYNGENPAFKPKKRPDKPVGLSKLEESQITKIHQAIAMIQFKLEMPIIKRRPTFEMEDRLVLEKVNYDTNEITIYGKTYPLKDTCFSTVDPQDPGKLLPEEEEVMNKLLLSFQQSEKLKRHMSFLMKKGKLYLPYNGNLLIHGCIPVDENGEMESFEIEGEQHKGRDLLDVFERHVRYAYDYKEITDDLSTDLVWYLWTGKYSSLFGKRAMTTFERYFIEDKASHKEPKNPYYYLREDVDMIRKMLKDFGLNPDEGRIINGHTPVKEIDGEDPIKADGKMLVIDGGFSKAYQKTTGIAGYTLLYNSFGMQLVAHQHFDSRDKVLSDGADELSVRRVVDEELQRKKIRDTNDGKVLQEQIRILKLLMHDRYLN.

It belongs to the FBPase class 3 family. Mn(2+) serves as cofactor.

It catalyses the reaction beta-D-fructose 1,6-bisphosphate + H2O = beta-D-fructose 6-phosphate + phosphate. It functions in the pathway carbohydrate biosynthesis; gluconeogenesis. This chain is Fructose-1,6-bisphosphatase class 3, found in Staphylococcus haemolyticus (strain JCSC1435).